A 116-amino-acid polypeptide reads, in one-letter code: NADH-ubiquinone oxidoreductase chain 3 (116 aa).

3 consecutive transmembrane segments (helical) span residues 3-23, 56-76, and 87-107; these read LITTIITITITLSAVLATISF, FFLIAILFLLFDLEIALLLPL, and LTLIWSTAVLALLTLGLIYEW.

The protein belongs to the complex I subunit 3 family.

Its subcellular location is the mitochondrion membrane. It catalyses the reaction a ubiquinone + NADH + 5 H(+)(in) = a ubiquinol + NAD(+) + 4 H(+)(out). In terms of biological role, core subunit of the mitochondrial membrane respiratory chain NADH dehydrogenase (Complex I) that is believed to belong to the minimal assembly required for catalysis. Complex I functions in the transfer of electrons from NADH to the respiratory chain. The immediate electron acceptor for the enzyme is believed to be ubiquinone. The protein is NADH-ubiquinone oxidoreductase chain 3 (MT-ND3) of Oncorhynchus gorbuscha (Pink salmon).